We begin with the raw amino-acid sequence, 865 residues long: Alanine--tRNA ligase (865 aa).

Histidine 568, histidine 572, cysteine 670, and histidine 674 together coordinate Zn(2+).

This sequence belongs to the class-II aminoacyl-tRNA synthetase family. It depends on Zn(2+) as a cofactor.

It is found in the cytoplasm. The catalysed reaction is tRNA(Ala) + L-alanine + ATP = L-alanyl-tRNA(Ala) + AMP + diphosphate. Its function is as follows. Catalyzes the attachment of alanine to tRNA(Ala) in a two-step reaction: alanine is first activated by ATP to form Ala-AMP and then transferred to the acceptor end of tRNA(Ala). Also edits incorrectly charged Ser-tRNA(Ala) and Gly-tRNA(Ala) via its editing domain. This is Alanine--tRNA ligase from Vibrio campbellii (strain ATCC BAA-1116).